Reading from the N-terminus, the 499-residue chain is Glycerol kinase (499 aa).

Residue T12 coordinates ADP. 3 residues coordinate ATP: T12, T13, and S14. Residue T12 coordinates sn-glycerol 3-phosphate. Residue R16 participates in ADP binding. Residues R82, E83, Y135, and D245 each coordinate sn-glycerol 3-phosphate. Glycerol-binding residues include R82, E83, Y135, D245, and Q246. T267 and G310 together coordinate ADP. T267, G310, Q314, and G411 together coordinate ATP. Residues G411 and N415 each coordinate ADP.

This sequence belongs to the FGGY kinase family. In terms of assembly, homotetramer and homodimer (in equilibrium).

It catalyses the reaction glycerol + ATP = sn-glycerol 3-phosphate + ADP + H(+). It participates in polyol metabolism; glycerol degradation via glycerol kinase pathway; sn-glycerol 3-phosphate from glycerol: step 1/1. With respect to regulation, activated by phosphorylation and inhibited by fructose 1,6-bisphosphate (FBP). Functionally, key enzyme in the regulation of glycerol uptake and metabolism. Catalyzes the phosphorylation of glycerol to yield sn-glycerol 3-phosphate. The polypeptide is Glycerol kinase (Clostridium beijerinckii (strain ATCC 51743 / NCIMB 8052) (Clostridium acetobutylicum)).